The sequence spans 261 residues: Large ribosomal subunit protein uL10m (261 aa).

Residues 1–28 constitute a mitochondrion transit peptide; sequence MAAAVAGMLRGGLLPQAGRLPTLQTVRY. The tract at residues 242-261 is disordered; the sequence is EKDSVMSANGKPDPDTVPDS.

It belongs to the universal ribosomal protein uL10 family. In terms of assembly, component of the mitochondrial large ribosomal subunit (mt-LSU). Mature mammalian 55S mitochondrial ribosomes consist of a small (28S) and a large (39S) subunit. The 28S small subunit contains a 12S ribosomal RNA (12S mt-rRNA) and 30 different proteins. The 39S large subunit contains a 16S rRNA (16S mt-rRNA), a copy of mitochondrial valine transfer RNA (mt-tRNA(Val)), which plays an integral structural role, and 52 different proteins. uL10m contributes a single cysteine residue to a zinc-binding site with mL66.

Its subcellular location is the mitochondrion. This chain is Large ribosomal subunit protein uL10m (MRPL10), found in Homo sapiens (Human).